A 186-amino-acid chain; its full sequence is Dynactin subunit 3 (186 aa).

Residue Ala-2 is modified to N-acetylalanine. Residues 46–66 (NIASKRERVKILYKKIEDLIK) are a coiled coil.

The protein belongs to the dynactin subunit 3 family. Subunit of dynactin, a multiprotein complex part of a tripartite complex with dynein and a adapter, such as BICDL1, BICD2 or HOOK3. The dynactin complex is built around ACTR1A/ACTB filament and consists of an actin-related filament composed of a shoulder domain, a pointed end and a barbed end. Its length is defined by its flexible shoulder domain. The soulder is composed of 2 DCTN1 subunits, 4 DCTN2 and 2 DCTN3. The 4 DCNT2 (via N-terminus) bind the ACTR1A filament and act as molecular rulers to determine the length. The pointed end is important for binding dynein-dynactin cargo adapters. Consists of 4 subunits: ACTR10, DCNT4, DCTN5 and DCTN6. The barbed end is composed of a CAPZA1:CAPZB heterodimers, which binds ACTR1A/ACTB filament and dynactin and stabilizes dynactin.

It localises to the cytoplasm. The protein localises to the cytoskeleton. It is found in the microtubule organizing center. The protein resides in the centrosome. Its subcellular location is the chromosome. It localises to the centromere. The protein localises to the kinetochore. It is found in the spindle. The protein resides in the cleavage furrow. Its subcellular location is the midbody. Part of the dynactin complex that activates the molecular motor dynein for ultra-processive transport along microtubules. Together with dynein may be involved in spindle assembly and cytokinesis. This chain is Dynactin subunit 3, found in Mus musculus (Mouse).